A 338-amino-acid chain; its full sequence is Lumican (338 aa).

An N-terminal signal peptide occupies residues 1-18 (MSLSAFTLFLALIGGTSG). Gln-19 bears the Pyrrolidone carboxylic acid mark. Sulfotyrosine is present on residues Tyr-20, Tyr-21, Tyr-23, and Tyr-30. Positions 28 to 66 (SIYGQSSPNCAPECNCPESYPSAMYCDELKLKSVPMVPP) constitute an LRRNT domain. 10 LRR repeats span residues 67–88 (GIKYLYLRNNQIDHIDEKAFEN), 91–114 (DLQWLILDHNLLENSKIKGRVFSK), 117–137 (QLKKLHINHNNLTESVGPLPK), 138–159 (SLEDLQLTHNKITKLGSFEGLV), 160–181 (NLTFIHLQHNRLKEDAVSAAFK), 185–205 (SLEYLDLSFNQIARLPSGLPV), 206–227 (SLLTLYLDNNKISNIPDEYFKR), 230–253 (ALQYLRLSHNELADSGIPGNSFNV), 255–276 (SLVELDLSYNKLKNIPTVNENL), and 277–296 (ENYYLEVNQLEKFDIKSFCK). Asn-88 is a glycosylation site (N-linked (GlcNAc...) (keratan sulfate) asparagine). Asn-127 carries an N-linked (GlcNAc...) (keratan sulfate) asparagine glycan. The N-linked (GlcNAc...) (keratan sulfate) asparagine glycan is linked to Asn-160. The N-linked (GlcNAc...) (keratan sulfate) asparagine glycan is linked to Asn-252. Cysteines 295 and 328 form a disulfide. Ser-304 is modified (phosphoserine). An LRR 11 repeat occupies 305–326 (KIKHLRLDGNRISETSLPPDMY).

This sequence belongs to the small leucine-rich proteoglycan (SLRP) family. SLRP class II subfamily. In terms of assembly, binds to laminin. In terms of processing, sulfated on tyrosine residue(s). Post-translationally, contains keratan sulfate. In terms of tissue distribution, cornea and other tissues.

The protein localises to the secreted. It localises to the extracellular space. It is found in the extracellular matrix. The polypeptide is Lumican (LUM) (Homo sapiens (Human)).